Here is a 240-residue protein sequence, read N- to C-terminus: Glyceraldehyde 3-phosphate phosphatase (240 aa).

The protein belongs to the HAD-like hydrolase superfamily. Requires Mg(2+) as cofactor.

Catalyzes the dephosphorylation of D,L-glyceraldehyde 3-phosphate in vitro. The polypeptide is Glyceraldehyde 3-phosphate phosphatase (Pyrococcus furiosus (strain ATCC 43587 / DSM 3638 / JCM 8422 / Vc1)).